The sequence spans 358 residues: Phenylalanine--tRNA ligase alpha subunit (358 aa).

Residue glutamate 262 participates in Mg(2+) binding.

It belongs to the class-II aminoacyl-tRNA synthetase family. Phe-tRNA synthetase alpha subunit type 1 subfamily. In terms of assembly, tetramer of two alpha and two beta subunits. Requires Mg(2+) as cofactor.

The protein resides in the cytoplasm. The enzyme catalyses tRNA(Phe) + L-phenylalanine + ATP = L-phenylalanyl-tRNA(Phe) + AMP + diphosphate + H(+). This Streptomyces coelicolor (strain ATCC BAA-471 / A3(2) / M145) protein is Phenylalanine--tRNA ligase alpha subunit (pheS).